The following is a 492-amino-acid chain: Aspartyl/glutamyl-tRNA(Asn/Gln) amidotransferase subunit B (492 aa).

It belongs to the GatB/GatE family. GatB subfamily. As to quaternary structure, heterotrimer of A, B and C subunits.

It carries out the reaction L-glutamyl-tRNA(Gln) + L-glutamine + ATP + H2O = L-glutaminyl-tRNA(Gln) + L-glutamate + ADP + phosphate + H(+). It catalyses the reaction L-aspartyl-tRNA(Asn) + L-glutamine + ATP + H2O = L-asparaginyl-tRNA(Asn) + L-glutamate + ADP + phosphate + 2 H(+). Functionally, allows the formation of correctly charged Asn-tRNA(Asn) or Gln-tRNA(Gln) through the transamidation of misacylated Asp-tRNA(Asn) or Glu-tRNA(Gln) in organisms which lack either or both of asparaginyl-tRNA or glutaminyl-tRNA synthetases. The reaction takes place in the presence of glutamine and ATP through an activated phospho-Asp-tRNA(Asn) or phospho-Glu-tRNA(Gln). This chain is Aspartyl/glutamyl-tRNA(Asn/Gln) amidotransferase subunit B, found in Dehalococcoides mccartyi (strain CBDB1).